We begin with the raw amino-acid sequence, 149 residues long: Tetracenomycin polyketide synthase protein TcmJ (149 aa).

A Cupin type-2 domain is found at 51–117; that stretch reads HIELAPGESV…NRGNVPARVV (67 aa). The interval 127 to 149 is disordered; that stretch reads PELGHVDTEPVPNPAAAPPKVGG.

As to quaternary structure, the tetracenomycin polyketide synthase (TCM PKS) is composed of a ketosynthase complex (TcmKL), an acyl carrier protein (TcmM), a cyclase (TcmN) and a probable second cyclase (TcmJ).

It carries out the reaction 10 malonyl-CoA + 8 H(+) = tetracenomycin F2 + 10 CO2 + 10 CoA + 2 H2O. The protein operates within antibiotic biosynthesis; tetracenomycin C biosynthesis. Functionally, involved in the biosynthesis of tetracenomycin C (TCM C). Part of a type II polyketide synthase (PKS) that catalyzes the synthesis of tetracenomycin F2 (TCM F2), a precursor of TCM C, from malonyl-CoA. TcmJ, while not absolutely required, greatly increases the tetracenomycin F2 production. It probably acts as a cyclase. This is Tetracenomycin polyketide synthase protein TcmJ from Streptomyces glaucescens.